We begin with the raw amino-acid sequence, 290 residues long: MLGEIRLKNIFFILIGAAIFSFGLVHFNMQNNLAEGGFTGITLLLYALFHISPSISNLVLNIPIFFIGWRLLGRTMFVYTLVGTVALSLFLSIFQRYEIHMPLQHDLALAALFAGVFIGAGLGIIFKFGGTTGGVDIIARLVNKYFGIPMGRTMFAFDACVIILSLLTYLSYKEAMYTLVAVFVAARLIDFIQEGGYAAKGATIISSKNDLIQKKILEEMERGVTILKGQGSYTKEDIDVLYCVVPKNELVMLKSVINSIDPHAFVAVSDVHDVLGEGFTLDENKNPLPR.

6 consecutive transmembrane segments (helical) span residues N9–M29, A47–I67, T75–Q95, D106–F126, F146–L166, and L179–A199.

The protein belongs to the UPF0750 family.

The protein localises to the cell membrane. The protein is UPF0750 membrane protein YpjC (ypjC) of Bacillus subtilis (strain 168).